We begin with the raw amino-acid sequence, 346 residues long: tRNA N6-adenosine threonylcarbamoyltransferase (346 aa).

Residues H111 and H115 each contribute to the Fe cation site. Substrate contacts are provided by residues 134-138 (LVSGG), D167, G180, D184, and N280. Residue D308 coordinates Fe cation.

The protein belongs to the KAE1 / TsaD family. Requires Fe(2+) as cofactor.

Its subcellular location is the cytoplasm. It carries out the reaction L-threonylcarbamoyladenylate + adenosine(37) in tRNA = N(6)-L-threonylcarbamoyladenosine(37) in tRNA + AMP + H(+). Its function is as follows. Required for the formation of a threonylcarbamoyl group on adenosine at position 37 (t(6)A37) in tRNAs that read codons beginning with adenine. Is involved in the transfer of the threonylcarbamoyl moiety of threonylcarbamoyl-AMP (TC-AMP) to the N6 group of A37, together with TsaE and TsaB. TsaD likely plays a direct catalytic role in this reaction. The protein is tRNA N6-adenosine threonylcarbamoyltransferase of Crocosphaera subtropica (strain ATCC 51142 / BH68) (Cyanothece sp. (strain ATCC 51142)).